A 1028-amino-acid chain; its full sequence is Beta-galactosidase (1028 aa).

Asn104 and Asp203 together coordinate substrate. Residue Asp203 coordinates Na(+). Mg(2+)-binding residues include Glu418, His420, and Glu463. Residues Glu463 and Glu539–His542 contribute to the substrate site. Glu463 functions as the Proton donor in the catalytic mechanism. Residue Glu539 is the Nucleophile of the active site. Asn599 contacts Mg(2+). Na(+) is bound by residues Phe603 and Asn606. Asn606 and Trp1004 together coordinate substrate.

The protein belongs to the glycosyl hydrolase 2 family. As to quaternary structure, homodimer. The cofactor is Mg(2+). Mn(2+) is required as a cofactor. Fe cation serves as cofactor. Requires Na(+) as cofactor. It depends on K(+) as a cofactor.

It carries out the reaction Hydrolysis of terminal non-reducing beta-D-galactose residues in beta-D-galactosides.. With respect to regulation, completely inhibited by Hg(2+), Cu(2+) Ag(2+), and partially inhibited by Zn(2+), imidazole and EDTA. Activated by Ca(2+), Co(2+), Ni(2+). Its function is as follows. This beta-galactosidase is also able to catalyze glycosyl transfer to a series of acceptors, including hexose, pentose, beta- or alpha-disaccharides, hexahydroxy alcohol, cyclitol, and aromatic glycosides, resulting in the production of galacto-oligosaccharides (GOS). This is Beta-galactosidase (lacZ) from Enterobacter agglomerans (Erwinia herbicola).